Reading from the N-terminus, the 251-residue chain is 4-hydroxy-tetrahydrodipicolinate reductase (251 aa).

Residues 8-13, 76-78, and 106-109 contribute to the NAD(+) site; these read GAKGRM, GTT, and APNF. The Proton donor/acceptor role is filled by His-136. His-137 contributes to the (S)-2,3,4,5-tetrahydrodipicolinate binding site. Lys-140 serves as the catalytic Proton donor. Position 146–147 (146–147) interacts with (S)-2,3,4,5-tetrahydrodipicolinate; that stretch reads GT.

This sequence belongs to the DapB family.

It localises to the cytoplasm. The enzyme catalyses (S)-2,3,4,5-tetrahydrodipicolinate + NAD(+) + H2O = (2S,4S)-4-hydroxy-2,3,4,5-tetrahydrodipicolinate + NADH + H(+). The catalysed reaction is (S)-2,3,4,5-tetrahydrodipicolinate + NADP(+) + H2O = (2S,4S)-4-hydroxy-2,3,4,5-tetrahydrodipicolinate + NADPH + H(+). It functions in the pathway amino-acid biosynthesis; L-lysine biosynthesis via DAP pathway; (S)-tetrahydrodipicolinate from L-aspartate: step 4/4. Functionally, catalyzes the conversion of 4-hydroxy-tetrahydrodipicolinate (HTPA) to tetrahydrodipicolinate. The chain is 4-hydroxy-tetrahydrodipicolinate reductase from Bifidobacterium longum (strain NCC 2705).